Here is a 272-residue protein sequence, read N- to C-terminus: Putative phosphoenolpyruvate synthase regulatory protein (272 aa).

ADP is bound at residue 152-159 (GVSRCGKT).

Belongs to the pyruvate, phosphate/water dikinase regulatory protein family. PSRP subfamily.

The catalysed reaction is [pyruvate, water dikinase] + ADP = [pyruvate, water dikinase]-phosphate + AMP + H(+). It carries out the reaction [pyruvate, water dikinase]-phosphate + phosphate + H(+) = [pyruvate, water dikinase] + diphosphate. Its function is as follows. Bifunctional serine/threonine kinase and phosphorylase involved in the regulation of the phosphoenolpyruvate synthase (PEPS) by catalyzing its phosphorylation/dephosphorylation. This chain is Putative phosphoenolpyruvate synthase regulatory protein, found in Pseudomonas savastanoi pv. phaseolicola (strain 1448A / Race 6) (Pseudomonas syringae pv. phaseolicola (strain 1448A / Race 6)).